A 288-amino-acid polypeptide reads, in one-letter code: MRLRLQVLVALLTCSSISVSLAYKPVVILHGILSGAESMASLVREIEEFHPGTIVYNCDKFNGWYSLENAWRQVDQVRDYLNEVGKLHPEGIIVLGYSQGGLLARAAIQSLPEHNVKTFISLSSPQAGQYGTSFLHLIFPDLAAKTAFELFYSRVGQHTSVGGYWNDPQRQDLYLKYSEFLPLINNEKKTSNSTSFKMGMVRLNKLVMIGGPNDDVITPWQSSHFGYFDENMDVIPFIRRPIFTSDSIGIRTLQEAGKLIIVVKPHVHHLAWHTRRDVIHEVIFPYLD.

The N-terminal stretch at 1–22 (MRLRLQVLVALLTCSSISVSLA) is a signal peptide. Ser-98 (nucleophile) is an active-site residue. An N-linked (GlcNAc...) asparagine glycan is attached at Asn-192. Residues Asp-214 and His-269 contribute to the active site.

The protein belongs to the palmitoyl-protein thioesterase family. Expressed in adult head and crop.

It is found in the lysosome. The catalysed reaction is hexadecanoyl-CoA + H2O = hexadecanoate + CoA + H(+). It carries out the reaction S-hexadecanoyl-N-acetylcysteamine + H2O = N-acetylcysteamine + hexadecanoate + H(+). In terms of biological role, catalyzes the cleavage of thioester bonds from S-palmitoyl-CoA or S-palmitoyl-N-acetylcysteamine (unbranched structures) but does not have activity against palmitoylcysteine or palmitoylated proteins, branched structures or bulky head groups. Conversely, hydrolyzes both long and short chain fatty acyl-CoA substrate. The chain is Lysosomal thioesterase PPT2 homolog (Ppt2) from Drosophila melanogaster (Fruit fly).